The sequence spans 372 residues: Biotin synthase (372 aa).

Residues 73–308 form the Radical SAM core domain; the sequence is CCGNTVDLCS…QQIIRYAGGR (236 aa). 3 residues coordinate [4Fe-4S] cluster: Cys-91, Cys-95, and Cys-98. [2Fe-2S] cluster contacts are provided by Cys-136, Cys-173, Cys-233, and Arg-303.

This sequence belongs to the radical SAM superfamily. Biotin synthase family. Homodimer. The cofactor is [4Fe-4S] cluster. [2Fe-2S] cluster is required as a cofactor.

The catalysed reaction is (4R,5S)-dethiobiotin + (sulfur carrier)-SH + 2 reduced [2Fe-2S]-[ferredoxin] + 2 S-adenosyl-L-methionine = (sulfur carrier)-H + biotin + 2 5'-deoxyadenosine + 2 L-methionine + 2 oxidized [2Fe-2S]-[ferredoxin]. It functions in the pathway cofactor biosynthesis; biotin biosynthesis; biotin from 7,8-diaminononanoate: step 2/2. Functionally, catalyzes the conversion of dethiobiotin (DTB) to biotin by the insertion of a sulfur atom into dethiobiotin via a radical-based mechanism. The polypeptide is Biotin synthase (Cyanothece sp. (strain PCC 7425 / ATCC 29141)).